The sequence spans 436 residues: Xaa-Arg dipeptidase (436 aa).

Belongs to the peptidase M20A family.

The enzyme catalyses beta-alanyl-L-lysine + H2O = beta-alanine + L-lysine. The catalysed reaction is beta-alanyl-L-ornithine + H2O = beta-alanine + L-ornithine. It catalyses the reaction N(2)-(4-aminobutanoyl)-L-lysine + H2O = 4-aminobutanoate + L-lysine. It carries out the reaction N(2)-(4-aminobutanoyl)-L-ornithine + H2O = 4-aminobutanoate + L-ornithine. The enzyme catalyses N(2)-(4-aminobutanoyl)-L-arginine + H2O = 4-aminobutanoate + L-arginine. Its function is as follows. Catalyzes the peptide bond hydrolysis in dipeptides having basic amino acids lysine, ornithine or arginine at C-terminus. Postulated to function in a metabolite repair mechanism by eliminating alternate dipeptide by-products formed during carnosine synthesis. In Homo sapiens (Human), this protein is Xaa-Arg dipeptidase.